Consider the following 65-residue polypeptide: Large ribosomal subunit protein bL35 (65 aa).

This sequence belongs to the bacterial ribosomal protein bL35 family.

The sequence is that of Large ribosomal subunit protein bL35 from Synechococcus sp. (strain CC9311).